We begin with the raw amino-acid sequence, 89 residues long: Dolichol-phosphate mannose synthase subunit 3 (89 aa).

A run of 2 helical transmembrane segments spans residues 7–27 (ILSLLVAISAFWIGLLQAAII) and 33–53 (WLLPIYFVVSLGCYGLLMVGV).

Belongs to the DPM3 family. Component of the dolichol-phosphate mannose (DPM) synthase complex composed of DPMS1, DPMS2 and DPMS3; in the complex interacts directly with DPMS1 and DPMS2.

The protein resides in the endoplasmic reticulum membrane. The protein operates within protein modification; protein glycosylation. In terms of biological role, regulates the biosynthesis of dolichol phosphate-mannose. Regulatory subunit of the dolichol-phosphate mannose (DPM) synthase complex; essential for the ER localization and stable expression of DPMS1. The polypeptide is Dolichol-phosphate mannose synthase subunit 3 (Arabidopsis thaliana (Mouse-ear cress)).